We begin with the raw amino-acid sequence, 284 residues long: L-ribulose-5-phosphate 3-epimerase UlaE (284 aa).

It belongs to the L-ribulose-5-phosphate 3-epimerase family.

It catalyses the reaction L-ribulose 5-phosphate = L-xylulose 5-phosphate. The protein operates within cofactor degradation; L-ascorbate degradation; D-xylulose 5-phosphate from L-ascorbate: step 3/4. Catalyzes the isomerization of L-xylulose-5-phosphate to L-ribulose-5-phosphate. Is involved in the anaerobic L-ascorbate utilization. The sequence is that of L-ribulose-5-phosphate 3-epimerase UlaE from Shigella flexneri serotype 5b (strain 8401).